The sequence spans 172 residues: Large ribosomal subunit protein uL10 (172 aa).

This sequence belongs to the universal ribosomal protein uL10 family. Part of the ribosomal stalk of the 50S ribosomal subunit. The N-terminus interacts with L11 and the large rRNA to form the base of the stalk. The C-terminus forms an elongated spine to which L12 dimers bind in a sequential fashion forming a multimeric L10(L12)X complex.

Forms part of the ribosomal stalk, playing a central role in the interaction of the ribosome with GTP-bound translation factors. In Nitrobacter winogradskyi (strain ATCC 25391 / DSM 10237 / CIP 104748 / NCIMB 11846 / Nb-255), this protein is Large ribosomal subunit protein uL10.